A 122-amino-acid polypeptide reads, in one-letter code: Glycine cleavage system H protein (122 aa).

Positions Met19 to Thr101 constitute a Lipoyl-binding domain. An N6-lipoyllysine modification is found at Lys60.

It belongs to the GcvH family. The glycine cleavage system is composed of four proteins: P, T, L and H. Requires (R)-lipoate as cofactor.

Its function is as follows. The glycine cleavage system catalyzes the degradation of glycine. The H protein shuttles the methylamine group of glycine from the P protein to the T protein. The protein is Glycine cleavage system H protein of Bartonella tribocorum (strain CIP 105476 / IBS 506).